Reading from the N-terminus, the 109-residue chain is Nucleoid-associated protein CKO_02678 (109 aa).

A disordered region spans residues lysine 89–phenylalanine 109.

Belongs to the YbaB/EbfC family. As to quaternary structure, homodimer.

The protein resides in the cytoplasm. The protein localises to the nucleoid. In terms of biological role, binds to DNA and alters its conformation. May be involved in regulation of gene expression, nucleoid organization and DNA protection. The sequence is that of Nucleoid-associated protein CKO_02678 from Citrobacter koseri (strain ATCC BAA-895 / CDC 4225-83 / SGSC4696).